A 348-amino-acid chain; its full sequence is Holliday junction branch migration complex subunit RuvB (348 aa).

The segment at 1-20 (MKPPARMVSPERRSDDVGDT) is disordered. The interval 1–183 (MKPPARMVSP…FGIPIRLNFY (183 aa)) is large ATPase domain (RuvB-L). ATP is bound by residues Leu-22, Arg-23, Gly-64, Lys-67, Thr-68, Thr-69, 130–132 (EDF), Arg-173, Tyr-183, and Arg-220. Thr-68 serves as a coordination point for Mg(2+). The interval 184-254 (TVEELEGIVT…IADHALSALE (71 aa)) is small ATPAse domain (RuvB-S). The tract at residues 257–348 (AAGLDAMDRR…QIGLFGNDDD (92 aa)) is head domain (RuvB-H). Residues Arg-293, Arg-312, and Arg-317 each contribute to the DNA site.

Belongs to the RuvB family. As to quaternary structure, homohexamer. Forms an RuvA(8)-RuvB(12)-Holliday junction (HJ) complex. HJ DNA is sandwiched between 2 RuvA tetramers; dsDNA enters through RuvA and exits via RuvB. An RuvB hexamer assembles on each DNA strand where it exits the tetramer. Each RuvB hexamer is contacted by two RuvA subunits (via domain III) on 2 adjacent RuvB subunits; this complex drives branch migration. In the full resolvosome a probable DNA-RuvA(4)-RuvB(12)-RuvC(2) complex forms which resolves the HJ.

The protein localises to the cytoplasm. The catalysed reaction is ATP + H2O = ADP + phosphate + H(+). Its function is as follows. The RuvA-RuvB-RuvC complex processes Holliday junction (HJ) DNA during genetic recombination and DNA repair, while the RuvA-RuvB complex plays an important role in the rescue of blocked DNA replication forks via replication fork reversal (RFR). RuvA specifically binds to HJ cruciform DNA, conferring on it an open structure. The RuvB hexamer acts as an ATP-dependent pump, pulling dsDNA into and through the RuvAB complex. RuvB forms 2 homohexamers on either side of HJ DNA bound by 1 or 2 RuvA tetramers; 4 subunits per hexamer contact DNA at a time. Coordinated motions by a converter formed by DNA-disengaged RuvB subunits stimulates ATP hydrolysis and nucleotide exchange. Immobilization of the converter enables RuvB to convert the ATP-contained energy into a lever motion, pulling 2 nucleotides of DNA out of the RuvA tetramer per ATP hydrolyzed, thus driving DNA branch migration. The RuvB motors rotate together with the DNA substrate, which together with the progressing nucleotide cycle form the mechanistic basis for DNA recombination by continuous HJ branch migration. Branch migration allows RuvC to scan DNA until it finds its consensus sequence, where it cleaves and resolves cruciform DNA. The chain is Holliday junction branch migration complex subunit RuvB from Bradyrhizobium sp. (strain ORS 278).